We begin with the raw amino-acid sequence, 339 residues long: NADH-quinone oxidoreductase subunit H (339 aa).

8 helical membrane-spanning segments follow: residues 9 to 29, 82 to 102, 115 to 135, 161 to 181, 187 to 207, 235 to 255, 275 to 295, and 311 to 331; these read IFPL…LILC, ILFV…WAVI, VGVL…IIAG, MGLV…SQIV, MPWW…ISVL, MGFA…SAMT, IPGF…FLWI, and GWKV…SVLI.

The protein belongs to the complex I subunit 1 family. As to quaternary structure, NDH-1 is composed of 14 different subunits. Subunits NuoA, H, J, K, L, M, N constitute the membrane sector of the complex.

The protein resides in the cell inner membrane. The enzyme catalyses a quinone + NADH + 5 H(+)(in) = a quinol + NAD(+) + 4 H(+)(out). Functionally, NDH-1 shuttles electrons from NADH, via FMN and iron-sulfur (Fe-S) centers, to quinones in the respiratory chain. The immediate electron acceptor for the enzyme in this species is believed to be ubiquinone. Couples the redox reaction to proton translocation (for every two electrons transferred, four hydrogen ions are translocated across the cytoplasmic membrane), and thus conserves the redox energy in a proton gradient. This subunit may bind ubiquinone. In Rickettsia bellii (strain OSU 85-389), this protein is NADH-quinone oxidoreductase subunit H.